A 259-amino-acid polypeptide reads, in one-letter code: Ribosomal RNA small subunit methyltransferase J (259 aa).

S-adenosyl-L-methionine-binding positions include 101 to 102 (RD), 117 to 118 (ER), 153 to 154 (SS), and Asp-176.

It belongs to the methyltransferase superfamily. RsmJ family.

The protein localises to the cytoplasm. The catalysed reaction is guanosine(1516) in 16S rRNA + S-adenosyl-L-methionine = N(2)-methylguanosine(1516) in 16S rRNA + S-adenosyl-L-homocysteine + H(+). Specifically methylates the guanosine in position 1516 of 16S rRNA. The polypeptide is Ribosomal RNA small subunit methyltransferase J (Vibrio vulnificus (strain YJ016)).